The following is a 114-amino-acid chain: Holo-[acyl-carrier-protein] synthase (114 aa).

Residues aspartate 8 and glutamate 58 each contribute to the Mg(2+) site.

The protein belongs to the P-Pant transferase superfamily. AcpS family. Requires Mg(2+) as cofactor.

The protein localises to the cytoplasm. The catalysed reaction is apo-[ACP] + CoA = holo-[ACP] + adenosine 3',5'-bisphosphate + H(+). Transfers the 4'-phosphopantetheine moiety from coenzyme A to a Ser of acyl-carrier-protein. The polypeptide is Holo-[acyl-carrier-protein] synthase (Mycoplasma genitalium (strain ATCC 33530 / DSM 19775 / NCTC 10195 / G37) (Mycoplasmoides genitalium)).